The sequence spans 609 residues: Protein FRIGIDA (609 aa).

Low complexity predominate over residues 1–18 (MSNYPPTVAAQPTTTANP). The tract at residues 1–31 (MSNYPPTVAAQPTTTANPLLQRHQSEQRRRE) is disordered. Coiled coils occupy residues 60-97 (DELA…LESN) and 409-440 (QIKE…LMEE). 2 disordered regions span residues 454–488 (RPRL…DDQD) and 587–609 (SEER…LDPK). Basic and acidic residues predominate over residues 474 to 484 (YRDRSFPSQRD). Over residues 594 to 609 (LSNQRSPRSNSSLDPK) the composition is skewed to polar residues.

The protein belongs to the Frigida family. Homodimer. Component of the transcription activator complex FRI-C composed of FRI, FRL1, SUF4, FLX and FES1. Interacts (via N-terminus) with FRL1 and (via C-terminus) with FLX (via N-terminus), SUF4 (via C-terminus) and FES1 (via C-terminus). Interacts with ASHH2 and RIN1, a component of the SWR1 chromatin-remodeling complex. Interacts with CBP20, FIP1 and FIP2. In terms of tissue distribution, expressed in ovules, but not in stamens.

The protein resides in the nucleus speckle. In terms of biological role, required for the regulation of flowering time in the late-flowering phenotype. Involved in the enrichment of a WDR5A-containing COMPASS-like complex at the 'FLOWERING LOCUS C' that trimethylates histone H3 'Lys-4', leading to FLC up-regulation and RNA levels increase. Variants with an early-flowering phenotype (Including cv. Columbia, cv. Landsberg Erecta and cv. Wassilewskija) show loss-of-function mutations of FRI. Able to delay flowering independently of FRL1 activity. Dispensable for the reactivation of FLC in early embryogenesis, but required to maintain high levels of FLC expression in later embryonic and vegetative development. Suppresses the repression of FLC by the autonomous pathway, but has no effect on the expression of the genes involved in this pathway. The polypeptide is Protein FRIGIDA (Arabidopsis thaliana (Mouse-ear cress)).